The chain runs to 94 residues: ATP synthase F(0) complex subunit f, mitochondrial (94 aa).

Alanine 2 bears the N-acetylalanine mark. Phosphoserine is present on serine 3. Lysine 22 carries the post-translational modification N6-acetyllysine. Residues 68 to 85 (MVLACYVLFSYSFSYKHL) form a helical membrane-spanning segment.

It belongs to the ATPase F chain family. As to quaternary structure, component of the ATP synthase complex composed at least of ATP5F1A/subunit alpha, ATP5F1B/subunit beta, ATP5MC1/subunit c (homooctomer), MT-ATP6/subunit a, MT-ATP8/subunit 8, ATP5ME/subunit e, ATP5MF/subunit f, ATP5MG/subunit g, ATP5MK/subunit k, ATP5MJ/subunit j, ATP5F1C/subunit gamma, ATP5F1D/subunit delta, ATP5F1E/subunit epsilon, ATP5PF/subunit F6, ATP5PB/subunit b, ATP5PD/subunit d, ATP5PO/subunit OSCP. ATP synthase complex consists of a soluble F(1) head domain (subunits alpha(3) and beta(3)) - the catalytic core - and a membrane F(0) domain - the membrane proton channel (subunits c, a, 8, e, f, g, k and j). These two domains are linked by a central stalk (subunits gamma, delta, and epsilon) rotating inside the F1 region and a stationary peripheral stalk (subunits F6, b, d, and OSCP).

The protein localises to the mitochondrion. Its subcellular location is the mitochondrion inner membrane. In terms of biological role, subunit f, of the mitochondrial membrane ATP synthase complex (F(1)F(0) ATP synthase or Complex V) that produces ATP from ADP in the presence of a proton gradient across the membrane which is generated by electron transport complexes of the respiratory chain. ATP synthase complex consist of a soluble F(1) head domain - the catalytic core - and a membrane F(1) domain - the membrane proton channel. These two domains are linked by a central stalk rotating inside the F(1) region and a stationary peripheral stalk. During catalysis, ATP synthesis in the catalytic domain of F(1) is coupled via a rotary mechanism of the central stalk subunits to proton translocation. In vivo, can only synthesize ATP although its ATP hydrolase activity can be activated artificially in vitro. Part of the complex F(0) domain. This chain is ATP synthase F(0) complex subunit f, mitochondrial, found in Homo sapiens (Human).